Consider the following 541-residue polypeptide: MIDNDKTHFDAIVIGTGFAGIYMLHKLRNELGLKVRAFDKASGVGGTWYWNKYPGARADTESFVYRYSFDKETSEGWDWRNRYVDQPEMLGYLQAVVDRHGLAKDIQLKTGIDSAVFDEIHHIWTLTTSTGELFTARYLVNAVGVLSKIVIPQIPGRDKFQGQIVHTGAWPADLSLEGKRVGVIGTGSTGVQFICAASKLARHLTVFQRSAQFCVPAGSRQVSEAYVAEYKNNFEQIWDGIRNSRIACGFEESGVSAMSVSEEERQKVFEHHWEIGNGFRFMFGTFSDIAVDPAANQAASDFIRAKIRQIVKDPETARKLCPTDLYAKRPVCTNDYYETYNLPNVSLVSLPENPIKELTANGVLTEDGVEHKLDLLVFATGFETVEGSYNQMEIRGRGGETLQHHWKDAPSSYLGVATAGFPNMFMVLGPNSAFSNLPPSIESQVEWIGELIGWAEGESTPVIETTREAEEAWTATCKEIAAYTLFPKVKSWIFGENIDGRSSRVLFYFGGLAGYRAKLREVADADYEGFILHSDPSSMVA.

FAD-binding positions include D39, 47-50 (TWYW), 59-60 (DT), Y65, and I112. 57–59 (RAD) is an NADP(+) binding site. NADP(+) is bound by residues 186–192 (TGSTGVQ), 209–210 (RS), and W492.

Belongs to the FAD-binding monooxygenase family. FAD is required as a cofactor.

It carries out the reaction 1,6-dihydroxyphenazine + NADPH + O2 = 1,6-dihydroxyphenazine N(5)-oxide + NADP(+) + H2O. The catalysed reaction is 1,6-dihydroxyphenazine N(5)-oxide + NADPH + O2 = 1,6-dihydroxyphenazine N(5),N(10)-dioxide + NADP(+) + H2O. It catalyses the reaction 1-hydroxy-6-methoxyphenazine + NADPH + O2 = 1-hydroxy-6-methoxyphenazine N(10)-oxide + NADP(+) + H2O. The enzyme catalyses quinolin-8-ol + NADPH + O2 = 8-hydroxyquinoline N-oxide + NADP(+) + H2O. Its function is as follows. Involved in the biosynthesis of phenazine natural products including myxin, an N(5),N(10)-dioxide phenazine antiobiotic, which has antimicrobial activity. Catalyzes the aromatic N-oxidations of phenazines, such as 1,6-dihydroxyphenazine (DHP), 1,6-dihydroxyphenazine N(5)-oxide (DHPO) and 1-hydroxy-6-methoxyphenazine to produce DHPO, iodinin (1,6-dihydroxyphenazine N(5),N(10)-dioxide) and 1-hydroxy-6-methoxyphenazine N(10)-oxide, respectively. Also catalyzes the N-oxidation of 8-hydroxyquinoline, but not 6-hydroxyquinoline (6-HQ), quinoline, quinoxaline, quinine and 2-phenylpyridine. This Lysobacter antibioticus protein is Phenazine N-monooxygenase PhzNO1.